The chain runs to 900 residues: Phosphoenolpyruvate carboxylase (900 aa).

Residues His-140 and Lys-568 contribute to the active site.

This sequence belongs to the PEPCase type 1 family. Requires Mg(2+) as cofactor.

The catalysed reaction is oxaloacetate + phosphate = phosphoenolpyruvate + hydrogencarbonate. Functionally, forms oxaloacetate, a four-carbon dicarboxylic acid source for the tricarboxylic acid cycle. The chain is Phosphoenolpyruvate carboxylase from Neisseria meningitidis serogroup A / serotype 4A (strain DSM 15465 / Z2491).